Consider the following 254-residue polypeptide: Imidazole glycerol phosphate synthase subunit HisF (254 aa).

Catalysis depends on residues Asp-12 and Asp-131.

This sequence belongs to the HisA/HisF family. Heterodimer of HisH and HisF.

The protein resides in the cytoplasm. The enzyme catalyses 5-[(5-phospho-1-deoxy-D-ribulos-1-ylimino)methylamino]-1-(5-phospho-beta-D-ribosyl)imidazole-4-carboxamide + L-glutamine = D-erythro-1-(imidazol-4-yl)glycerol 3-phosphate + 5-amino-1-(5-phospho-beta-D-ribosyl)imidazole-4-carboxamide + L-glutamate + H(+). It participates in amino-acid biosynthesis; L-histidine biosynthesis; L-histidine from 5-phospho-alpha-D-ribose 1-diphosphate: step 5/9. Its function is as follows. IGPS catalyzes the conversion of PRFAR and glutamine to IGP, AICAR and glutamate. The HisF subunit catalyzes the cyclization activity that produces IGP and AICAR from PRFAR using the ammonia provided by the HisH subunit. This is Imidazole glycerol phosphate synthase subunit HisF from Leuconostoc mesenteroides subsp. mesenteroides (strain ATCC 8293 / DSM 20343 / BCRC 11652 / CCM 1803 / JCM 6124 / NCDO 523 / NBRC 100496 / NCIMB 8023 / NCTC 12954 / NRRL B-1118 / 37Y).